A 250-amino-acid chain; its full sequence is uncharacterized protein (250 aa).

Residues 1–19 form the signal peptide; sequence MAKPRNAAESKAAKAQANA. 2 helical membrane-spanning segments follow: residues 51–71 and 73–93; these read IGAF…AGGF and MFTM…VIFG. The disordered stretch occupies residues 226-250; it reads AGVMPKGPLPTTAKMRSVQRTVRRK.

The protein localises to the cell membrane. This is an uncharacterized protein from Mycobacterium tuberculosis (strain CDC 1551 / Oshkosh).